Here is a 147-residue protein sequence, read N- to C-terminus: Putative pre-16S rRNA nuclease (147 aa).

It belongs to the YqgF nuclease family.

The protein localises to the cytoplasm. Functionally, could be a nuclease involved in processing of the 5'-end of pre-16S rRNA. The chain is Putative pre-16S rRNA nuclease from Limosilactobacillus reuteri (strain DSM 20016) (Lactobacillus reuteri).